We begin with the raw amino-acid sequence, 63 residues long: Large ribosomal subunit protein uL30 (63 aa).

The protein belongs to the universal ribosomal protein uL30 family. Part of the 50S ribosomal subunit.

In Bradyrhizobium sp. (strain ORS 278), this protein is Large ribosomal subunit protein uL30.